The chain runs to 166 residues: Myosin regulatory light chain 2, ventricular/cardiac muscle isoform (166 aa).

S2 carries the post-translational modification N,N,N-trimethylserine. S14, S15, and S19 each carry phosphoserine. 3 EF-hand domains span residues 24 to 59 (TQIQ…LGRV), 94 to 129 (DPEE…QAER), and 130 to 165 (FSKE…GEEK). Ca(2+)-binding residues include D37, N39, D41, and D48. Residue T52 is modified to Phosphothreonine.

In terms of assembly, myosin is a hexamer of 2 heavy chains and 4 light chains. Interacts with MYOC. In terms of processing, N-terminus is methylated by METTL11A/NTM1. Post-translationally, phosphorylated by MYLK3 and MYLK2; promotes cardiac muscle contraction and function. Dephosphorylated by PPP1CB complexed to PPP1R12B. The phosphorylated form in adult is expressed as gradients across the heart from endocardium (low phosphorylation) to epicardium (high phosphorylation); regulates cardiac torsion and workload distribution. As to expression, abundantly expressed in both cardiac and slow skeletal muscle (soleus), with no detectable expression in fast skeletal muscle (vastus lateralis) or non-muscle tissue.

The protein resides in the cytoplasm. Its subcellular location is the myofibril. It localises to the sarcomere. The protein localises to the a band. In terms of biological role, contractile protein that plays a role in heart development and function. Following phosphorylation, plays a role in cross-bridge cycling kinetics and cardiac muscle contraction by increasing myosin lever arm stiffness and promoting myosin head diffusion; as a consequence of the increase in maximum contraction force and calcium sensitivity of contraction force. These events altogether slow down myosin kinetics and prolong duty cycle resulting in accumulated myosins being cooperatively recruited to actin binding sites to sustain thin filament activation as a means to fine-tune myofilament calcium sensitivity to force. During cardiogenesis plays an early role in cardiac contractility by promoting cardiac myofibril assembly. The polypeptide is Myosin regulatory light chain 2, ventricular/cardiac muscle isoform (Rattus norvegicus (Rat)).